Consider the following 118-residue polypeptide: Large ribosomal subunit protein bL20 (118 aa).

It belongs to the bacterial ribosomal protein bL20 family.

Functionally, binds directly to 23S ribosomal RNA and is necessary for the in vitro assembly process of the 50S ribosomal subunit. It is not involved in the protein synthesizing functions of that subunit. The sequence is that of Large ribosomal subunit protein bL20 from Serratia proteamaculans (strain 568).